Reading from the N-terminus, the 186-residue chain is Threonylcarbamoyl-AMP synthase (186 aa).

The region spanning 5–186 (TQSINDAVKC…DAITGEILRL (182 aa)) is the YrdC-like domain.

Belongs to the SUA5 family. TsaC subfamily.

It localises to the cytoplasm. The catalysed reaction is L-threonine + hydrogencarbonate + ATP = L-threonylcarbamoyladenylate + diphosphate + H2O. Its function is as follows. Required for the formation of a threonylcarbamoyl group on adenosine at position 37 (t(6)A37) in tRNAs that read codons beginning with adenine. Catalyzes the conversion of L-threonine, HCO(3)(-)/CO(2) and ATP to give threonylcarbamoyl-AMP (TC-AMP) as the acyladenylate intermediate, with the release of diphosphate. The protein is Threonylcarbamoyl-AMP synthase of Coxiella burnetii (strain RSA 493 / Nine Mile phase I).